An 878-amino-acid chain; its full sequence is Coatomer subunit gamma (878 aa).

6 HEAT repeats span residues 64–101 (REAT…VAED), 287–324 (RMLS…THPA), 326–359 (VTTC…GAES), 360–396 (SVER…KYPR), 399–434 (TVLM…ENAD), and 471–508 (ATPS…SCPA).

It belongs to the COPG family. Oligomeric complex that consists of at least the alpha, beta, beta', gamma, delta, epsilon and zeta subunits.

The protein localises to the cytoplasm. It is found in the golgi apparatus membrane. The protein resides in the cytoplasmic vesicle. It localises to the COPI-coated vesicle membrane. Its subcellular location is the endoplasmic reticulum. The coatomer is a cytosolic protein complex that binds to dilysine motifs and reversibly associates with Golgi non-clathrin-coated vesicles, which further mediate biosynthetic protein transport from the ER, via the Golgi up to the trans Golgi network. Coatomer complex is required for budding from Golgi membranes, and is essential for the retrograde Golgi-to-ER transport of dilysine-tagged proteins. Required for limiting lipid storage in lipid droplets. Involved in the expansion of luminal extracellular matrices and apical membrane during tubulogenesis. Required in the tracheal epithelium for luminal protein secretion and diametric tube growth. In salivary glands, required for deposition of O-glycans and luminal extracellular matrix assembly. Required for epidermal morphogenesis and cuticle development. The polypeptide is Coatomer subunit gamma (Drosophila pseudoobscura pseudoobscura (Fruit fly)).